The chain runs to 375 residues: Fasciculation and elongation protein zeta-2 (375 aa).

The segment at 1-42 is disordered; that stretch reads MAADGDWQDFYEFQEPAGSVRDQENCNASPEAGAGAHAGGDS. Residues S130, S171, and S190 each carry the phosphoserine modification. A coiled-coil region spans residues 156–177; the sequence is TADQVIEEIEEMMQESPDLEDD. A coiled-coil region spans residues 206–281; sequence ERVKRLSVSE…AKKKKKLKNG (76 aa). A disordered region spans residues 265 to 297; that stretch reads QKEHKETAKKKKKLKNGSSQNGRNERSHMPGTR.

The protein belongs to the zygin family. In terms of assembly, homodimer; disulfide-linked. May form heterodimers with FEZ1. Interacts with synaptotagmin.

Functionally, involved in axonal outgrowth and fasciculation. This is Fasciculation and elongation protein zeta-2 (Fez2) from Rattus norvegicus (Rat).